The primary structure comprises 233 residues: Nuclear speckle RNA-binding protein A (233 aa).

Disordered stretches follow at residues methionine 1–threonine 54, valine 68–valine 92, and phenylalanine 214–arginine 233. Residues glycine 71–asparagine 91 are compositionally biased toward gly residues. Positions asparagine 136–lysine 222 constitute an RRM domain.

As to expression, expressed in root meristems, lateral root primordia and root vascular tissues.

It is found in the nucleus speckle. Alternative splicing (AS) regulator that binds to specific mRNAs and modulates auxin effects on the transcriptome. Displaced from its targets upon binding to AS competitor long non-coding RNA (ASCO-RNA). The chain is Nuclear speckle RNA-binding protein A from Arabidopsis thaliana (Mouse-ear cress).